Here is a 709-residue protein sequence, read N- to C-terminus: MDTSNSWFDASKVQSLNFDLQTNSYYSNARGSDPSSYAIEGEYKTLATDDLGNILNLNYGETNEVIMNEINDLNLPLGPLSDEKSVKVSTFSELIGNDWQSMNFDLENNSREVTLNATSLLNENRLNQDSGMTVYQKTMSDKPHDEKKISMADNLLSTINKSEINKGFDRNLGELLLQQQQELREQLRAQQEANKKLELELKQTQYKQQQLQATLENSDGPQFLSPKRKISPASENVEDVYANSLSPMISPPMSNTSFTGSPSRRNNRQKYCLQRKNSSGTVGPLCFQELNEGFNDSLISPKKIRSNPNENLSSKTKFITPFTPKSRVSSATSNSANITPNNLRLDFKINVEDQESEYSEKPLGLGIELLGKPGPSPTKSVSLKSASVDIMPTIPGSVNNTPSVNKVSLSSSYIDQYTPRGKQLHFSSISENALGINAATPHLKPPSQQARHREGVFNDLDPNVLTKNTDNEGDDNEENEPESRFVISETPSPVLKSQSKYEGRSPQFGTHIKEINTYTTNSPSKITRKLTTLPRGSIDKYVKEMPDKTFECLFPGCTKTFKRRYNIRSHIQTHLEDRPYSCDHPGCDKAFVRNHDLIRHKKSHQEKAYACPCGKKFNREDALVVHRSRMICSGGKKYENVVIKRSPRKRGRPRKDGTSSVSSSPIKENINKDHNGQLMFKLEDQLRRERSYDGNGTGIMVSPMKTNQR.

Phosphoserine is present on Ser225. Residues 245–264 show a composition bias toward polar residues; it reads LSPMISPPMSNTSFTGSPSR. Positions 245 to 267 are disordered; it reads LSPMISPPMSNTSFTGSPSRRNN. A phosphoserine mark is found at Ser278 and Ser300. Thr339 carries the phosphothreonine modification. Phosphoserine is present on Ser376. The interval 443 to 483 is disordered; sequence LKPPSQQARHREGVFNDLDPNVLTKNTDNEGDDNEENEPES. Residues 471–480 are compositionally biased toward acidic residues; it reads NEGDDNEENE. Residues Ser488, Ser492, and Ser505 each carry the phosphoserine modification. Phosphoserine; by CDC28 is present on Ser522. 3 consecutive C2H2-type zinc fingers follow at residues 550 to 574, 580 to 604, and 609 to 632; these read FECL…IQTH, YSCD…KKSH, and YACP…RMIC. Positions 635–659 match the Nuclear localization signal motif; the sequence is GKKYENVVIKRSPRKRGRPRKDGTS. Residues 644-677 are disordered; that stretch reads KRSPRKRGRPRKDGTSSVSSSPIKENINKDHNGQ. Ser646 bears the Phosphoserine; by CDC28 mark. A DNA-binding region (a.T hook) is located at residues 647-659; that stretch reads PRKRGRPRKDGTS. Phosphoserine; by CDC28 is present on Ser664.

In terms of processing, cell cycle-dependent phosphorylation of three serine residues prevents SWI5 from entering the nucleus, and it accumulates in the cytoplasm. As a consequence of CDC28 kinase inactivation at the end of anaphase, the three serine residues are dephosphorylated and SWI5 enters the nucleus to activate transcription. It is then rapidly degraded. Threonine phosphorylation also seems to occur. Post-translationally, phosphorylated by PHO85.

The protein localises to the nucleus. Its subcellular location is the cytoplasm. Its function is as follows. Determines the mother-cell-specific transcription of the HO endonuclease gene that is responsible for the initiation of mating-type switching in yeast. Recognizes a specific sequence in the promoter of the HO gene. Activates EGT2 transcription in a concentration-dependent manner. Synthesized during G2 and early mitosis. In Saccharomyces cerevisiae (strain ATCC 204508 / S288c) (Baker's yeast), this protein is Transcriptional factor SWI5 (SWI5).